The following is a 126-amino-acid chain: MSIPADLKYTESHEWVRTEADGTLTVGITDHAQEALGDIVFFEVQELGKTVSAGDTVAVIESVKAASDIYAPVSGEIIEANSAVADTPDLVNSTPYESWLFKIKPAADAALDRLIDADAYSKSIGA.

One can recognise a Lipoyl-binding domain in the interval 23–104 (TLTVGITDHA…PYESWLFKIK (82 aa)). Residue lysine 64 is modified to N6-lipoyllysine.

This sequence belongs to the GcvH family. In terms of assembly, the glycine cleavage system is composed of four proteins: P, T, L and H. Requires (R)-lipoate as cofactor.

Its function is as follows. The glycine cleavage system catalyzes the degradation of glycine. The H protein shuttles the methylamine group of glycine from the P protein to the T protein. This is Glycine cleavage system H protein from Paraburkholderia xenovorans (strain LB400).